The sequence spans 562 residues: Sesquiterpene synthase (562 aa).

Residues aspartate 315, aspartate 319, and glutamate 467 each coordinate Mg(2+). Residues 315-319 (DDIYD) carry the DDXXD motif motif.

The protein belongs to the terpene synthase family. Tpsa subfamily. Requires Mg(2+) as cofactor. It depends on Mn(2+) as a cofactor.

Functionally, catalyzes the formation of beta-elemol, guaiol and bulnesol. The protein is Sesquiterpene synthase of Santalum spicatum (Australian sandalwood).